The chain runs to 123 residues: Small ribosomal subunit protein uS13c (123 aa).

Residues 90–123 (GKRHRNNLPVRGQRTRTNARSRRGSKKTVTGKKK) form a disordered region. A compositionally biased stretch (basic residues) spans 102 to 123 (QRTRTNARSRRGSKKTVTGKKK).

The protein belongs to the universal ribosomal protein uS13 family. As to quaternary structure, part of the 30S ribosomal subunit.

The protein resides in the plastid. It localises to the chloroplast. In terms of biological role, located at the top of the head of the 30S subunit, it contacts several helices of the 16S rRNA. This is Small ribosomal subunit protein uS13c from Trieres chinensis (Marine centric diatom).